Consider the following 448-residue polypeptide: MSTHLTETWEKAINIIKGELTEVSFNTWIKSINPISLENNSFKLAVPNDFTKGILESRYKDLIVNALKLLTSKKYNIDFIVTTEEKIEENEKNHNNEKSNIVVNDEMSTMLNPKYTFDSFVIGNSNRFAHAASLAVAEAPAKAYNPLFIYGGVGLGKTHLMHAIGHYILHNNPKSQVVYVSSEKFTNELINSIKDDKNVEFRNKYRNIDILLVDDIQFIAGKERTQEEFFHTFNALYEANKQIIISSDRPPKEIPTLEDRLRSRFEWGLIADIQAPDFETRMAILKKKADVEKLNIPNEVMVYIATKIKSNIRELEGALIRIVAFSSLTNKEISVDLASEALKDIISSKQTRQVTIDIIQEVVANYYNLKIEDLKSARRTRNIAFPRQIAMYLSRKLTDMSLPKIGEEFGGRDHTTVIHAYEKISNNLKKDESLQNAINELNKRINQK.

Positions 1 to 73 are domain I, interacts with DnaA modulators; it reads MSTHLTETWE…VNALKLLTSK (73 aa). A domain II region spans residues 73-109; that stretch reads KKYNIDFIVTTEEKIEENEKNHNNEKSNIVVNDEMST. The domain III, AAA+ region stretch occupies residues 110-326; it reads MLNPKYTFDS…GALIRIVAFS (217 aa). 4 residues coordinate ATP: Gly-154, Gly-156, Lys-157, and Thr-158. The interval 327–448 is domain IV, binds dsDNA; that stretch reads SLTNKEISVD…NELNKRINQK (122 aa).

Belongs to the DnaA family. In terms of assembly, oligomerizes as a right-handed, spiral filament on DNA at oriC.

Its subcellular location is the cytoplasm. In terms of biological role, plays an essential role in the initiation and regulation of chromosomal replication. ATP-DnaA binds to the origin of replication (oriC) to initiate formation of the DNA replication initiation complex once per cell cycle. Binds the DnaA box (a 9 base pair repeat at the origin) and separates the double-stranded (ds)DNA. Forms a right-handed helical filament on oriC DNA; dsDNA binds to the exterior of the filament while single-stranded (ss)DNA is stabiized in the filament's interior. The ATP-DnaA-oriC complex binds and stabilizes one strand of the AT-rich DNA unwinding element (DUE), permitting loading of DNA polymerase. After initiation quickly degrades to an ADP-DnaA complex that is not apt for DNA replication. Binds acidic phospholipids. In Clostridium botulinum (strain 657 / Type Ba4), this protein is Chromosomal replication initiator protein DnaA.